The sequence spans 304 residues: Acetylglutamate kinase (304 aa).

Substrate-binding positions include 77–78 (GG), R99, and N193.

It belongs to the acetylglutamate kinase family. ArgB subfamily.

The protein resides in the cytoplasm. The catalysed reaction is N-acetyl-L-glutamate + ATP = N-acetyl-L-glutamyl 5-phosphate + ADP. Its pathway is amino-acid biosynthesis; L-arginine biosynthesis; N(2)-acetyl-L-ornithine from L-glutamate: step 2/4. In terms of biological role, catalyzes the ATP-dependent phosphorylation of N-acetyl-L-glutamate. This Pelodictyon phaeoclathratiforme (strain DSM 5477 / BU-1) protein is Acetylglutamate kinase.